A 308-amino-acid chain; its full sequence is Mitochondrial brown fat uncoupling protein 1 (308 aa).

At 1–10 (MVASAEADVP) the chain is on the mitochondrial intermembrane side. The chain crosses the membrane as a helical span at residues 11–33 (PPTMLVKIASAGLSACLADIITF). 3 Solcar repeats span residues 11–103 (PPTM…VQEY), 112–202 (ATLG…LKEA), and 211–296 (DDIP…LKKE). The Mitochondrial matrix segment spans residues 34–74 (PLDTAKVRLQVQGERPNAPGVKYKGVLGTIATVAKTEGPLK). Residue K57 participates in fatty acid 16:0 binding. A helical transmembrane segment spans residues 75-97 (LYGGLPAGIQRQISFASLRIGLY). Residues 98–117 (DTVQEYFNAHRKTPATLGNK) are Mitochondrial intermembrane-facing. Residues 118-134 (ISAGLMTGCVTVFIGQP) form a helical membrane-spanning segment. Residues 135–179 (TEVAKVRMQAQSSLHWLKPRYSGTYNAYYVIVKTEGFLGLWKGTS) are Mitochondrial matrix-facing. The helical transmembrane segment at 180 to 196 (LNLTRNVIINCTELVVY) threads the bilayer. The Mitochondrial intermembrane portion of the chain corresponds to 197–213 (DVLKEALVKNNVLADDI). A helical membrane pass occupies residues 214–233 (PCHLLAALTAGFCTTALASP). Topologically, residues 234 to 267 (VDVVKTRFINSPPGYYPHVHNCALNMLQKEGLRA) are mitochondrial matrix. Position 255 is a cysteine sulfenic acid (-SOH) (C255). Residues 268 to 290 (FFKGFVPSFLRLGSWTVIMHVTF) form a helical membrane-spanning segment. Residue K270 participates in fatty acid 16:0 binding. Residues 291–308 (EQLKKELMKSRQTVDCAT) are Mitochondrial intermembrane-facing.

Belongs to the mitochondrial carrier (TC 2.A.29) family. As to quaternary structure, most probably functions as a monomer. Binds one purine nucleotide per monomer. However, has also been suggested to function as a homodimer or a homotetramer. Tightly associates with cardiolipin in the mitochondrion inner membrane; may stabilize and regulate its activity. Post-translationally, may undergo sulfenylation upon cold exposure. May increase the sensitivity of UCP1 thermogenic function to the activation by noradrenaline probably through structural effects. May undergo ubiquitin-mediated proteasomal degradation. As to expression, brown adipose tissue.

It is found in the mitochondrion inner membrane. It carries out the reaction H(+)(in) = H(+)(out). With respect to regulation, has no constitutive proton transporter activity and has to be activated by long-chain fatty acids/LCFAs. Inhibited by purine nucleotides. Both purine nucleotides and LCFAs bind the cytosolic side of the transporter and directly compete to activate or inhibit it. Activated by noradrenaline and reactive oxygen species. Despite lacking canonical translational encoding for selenocysteine, a small pool of the protein has been observed to selectively incorporate selenocysteine at 'Cys-255'. Selenocysteine-modified protein is highly sensitive to redox modification and may constitute a pool of protein highly sensitive to activation by elevated levels of reactive oxygen species (ROS). In terms of biological role, mitochondrial protein responsible for thermogenic respiration, a specialized capacity of brown adipose tissue and beige fat that participates in non-shivering adaptive thermogenesis to temperature and diet variations and more generally to the regulation of energy balance. Functions as a long-chain fatty acid/LCFA and proton symporter, simultaneously transporting one LCFA and one proton through the inner mitochondrial membrane. However, LCFAs remaining associated with the transporter via their hydrophobic tails, it results in an apparent transport of protons activated by LCFAs. Thereby, dissipates the mitochondrial proton gradient and converts the energy of substrate oxydation into heat instead of ATP. Regulates the production of reactive oxygen species/ROS by mitochondria. The polypeptide is Mitochondrial brown fat uncoupling protein 1 (Suncus murinus (Asian house shrew)).